Reading from the N-terminus, the 297-residue chain is MPELPEVETVRRGLEPVMEGARIIHVEQRRADLRFPFPAGFSEHVKGCRIEALGRRAKYLLLHLENGRVLVSHLGMSGSFRIEESGSDKLRGDFHYARSKAEKHDHVVFHLARHEGGSARVIYNDPRRFGFMLLLDSADLEAHPLFAGLGVEPTGNALDGALLARLLAGKRAPLKAALMDQRLVAGLGNIYVCEALWRAGLSPRRIAATIATREGKSTGRSERLAGAIRTVIAEAIAAGGSSLKDYVQADGSLGYFQHSFSVYDREGKPCRKEGCSGTIQRFVQGGRSTFYCPICQR.

The active-site Schiff-base intermediate with DNA is the P2. Catalysis depends on E3, which acts as the Proton donor. Catalysis depends on K58, which acts as the Proton donor; for beta-elimination activity. H104, R127, and K170 together coordinate DNA. The FPG-type zinc finger occupies 261–297 (SVYDREGKPCRKEGCSGTIQRFVQGGRSTFYCPICQR). R287 functions as the Proton donor; for delta-elimination activity in the catalytic mechanism.

Belongs to the FPG family. Monomer. Requires Zn(2+) as cofactor.

The enzyme catalyses Hydrolysis of DNA containing ring-opened 7-methylguanine residues, releasing 2,6-diamino-4-hydroxy-5-(N-methyl)formamidopyrimidine.. The catalysed reaction is 2'-deoxyribonucleotide-(2'-deoxyribose 5'-phosphate)-2'-deoxyribonucleotide-DNA = a 3'-end 2'-deoxyribonucleotide-(2,3-dehydro-2,3-deoxyribose 5'-phosphate)-DNA + a 5'-end 5'-phospho-2'-deoxyribonucleoside-DNA + H(+). Its function is as follows. Involved in base excision repair of DNA damaged by oxidation or by mutagenic agents. Acts as a DNA glycosylase that recognizes and removes damaged bases. Has a preference for oxidized purines, such as 7,8-dihydro-8-oxoguanine (8-oxoG). Has AP (apurinic/apyrimidinic) lyase activity and introduces nicks in the DNA strand. Cleaves the DNA backbone by beta-delta elimination to generate a single-strand break at the site of the removed base with both 3'- and 5'-phosphates. The polypeptide is Formamidopyrimidine-DNA glycosylase (Chelativorans sp. (strain BNC1)).